The primary structure comprises 250 residues: DNA repair protein RecO (250 aa).

Belongs to the RecO family.

In terms of biological role, involved in DNA repair and RecF pathway recombination. The polypeptide is DNA repair protein RecO (Lactobacillus acidophilus (strain ATCC 700396 / NCK56 / N2 / NCFM)).